The chain runs to 192 residues: uncharacterized protein (192 aa).

This is an uncharacterized protein from Nostoc sp. (strain PCC 7120 / SAG 25.82 / UTEX 2576).